Consider the following 334-residue polypeptide: Non-functional pseudokinase ZED1 (334 aa).

The 286-residue stretch at Phe-49–Ser-334 folds into the Protein kinase domain. Residues Ile-55 to Trp-63 and Lys-76 contribute to the ATP site. Thr-125 and Thr-177 each carry O-acetylthreonine.

This sequence belongs to the protein kinase superfamily. Ser/Thr protein kinase family. ZRK subfamily. As to quaternary structure, interacts with RPP13L4/ZAR1. Component of an immune signaling complex made of, at least, SZE1, BKN2/SZE2, ZAR1 and ZED1. Binds directly to SZE1 at the plasma membrane. Expressed in seedlings, young leaves, floral organs, shoot apical meristems (SAM) and inflorescence stems.

Its subcellular location is the cytoplasm. It is found in the cytosol. It localises to the nucleus. The protein resides in the cell membrane. Functionally, together with RPP13L4/ZAR1, involved in the ambient temperature (above 22 degrees Celsius)-sensitive aerial organ development. Together with RPP13L4/ZAR1, involved in the regulation of the ambient temperature-sensitive intersection of growth and immune response in the absence of pathogens, by repressing the transcription of SNC1. Probable non-functional kinase required for recognition of the Pseudomonas syringae type III effector HopZ1a by RPP13L4/ZAR1 and, together with SZE1 and SZE2, to trigger subsequent defense responses. May function as a decoy to trap HopZ1a in the ZAR1 complex for recognition by the plant immune system. This chain is Non-functional pseudokinase ZED1, found in Arabidopsis thaliana (Mouse-ear cress).